The chain runs to 368 residues: Chorismate synthase (368 aa).

Residue Arg46 participates in NADP(+) binding. Residues 124–126 (RAS), Gly284, 299–303 (KPTPS), and Arg326 each bind FMN.

Belongs to the chorismate synthase family. Requires FMNH2 as cofactor.

The enzyme catalyses 5-O-(1-carboxyvinyl)-3-phosphoshikimate = chorismate + phosphate. It participates in metabolic intermediate biosynthesis; chorismate biosynthesis; chorismate from D-erythrose 4-phosphate and phosphoenolpyruvate: step 7/7. Functionally, catalyzes the anti-1,4-elimination of the C-3 phosphate and the C-6 proR hydrogen from 5-enolpyruvylshikimate-3-phosphate (EPSP) to yield chorismate, which is the branch point compound that serves as the starting substrate for the three terminal pathways of aromatic amino acid biosynthesis. This reaction introduces a second double bond into the aromatic ring system. The chain is Chorismate synthase from Pyrobaculum arsenaticum (strain DSM 13514 / JCM 11321 / PZ6).